Here is a 385-residue protein sequence, read N- to C-terminus: MPPQIKHDLNRSGWEATDFPSVCENCLPENPYVKMLKEDYGAECKLCTRPFTVFSWAADRAHARKKRTNICLTCARLKNACQCCILDLQFGLPIIIRDKALELVAPGPQSEINREYFAQNNERAIEEGRAGVEEYEKADEKARELLRRLAQSKPYFRKGREVDEEGNPVNGSSSGAGRATGGNPAVGAGVGGVGPIRTRDSRAAAAAGARPGGGRRPNAAPAPPPGPKDWLPPADKSIMSLFVTGIEDDLPEFKIRDFFKAFGKIKSLVVSHMSHAAFVNYETREAAEKASAECKGRAVIAGCPLRVRWSVPKALGTMNKEQRSEMLRDGRSAFGSGQKTGGQKAIGGQNAQGGASGAQKDDASNLTIAAPPGAADVQYASLSGN.

The disordered stretch occupies residues 157–233 (RKGREVDEEG…PPGPKDWLPP (77 aa)). The span at 171-187 (GSSSGAGRATGGNPAVG) shows a compositional bias: low complexity. One can recognise an RRM domain in the interval 239-312 (MSLFVTGIED…CPLRVRWSVP (74 aa)). Residues 320 to 331 (KEQRSEMLRDGR) are compositionally biased toward basic and acidic residues. The interval 320–370 (KEQRSEMLRDGRSAFGSGQKTGGQKAIGGQNAQGGASGAQKDDASNLTIAA) is disordered.

This sequence belongs to the SLT11 family. Associated with the spliceosome.

It is found in the nucleus. Its function is as follows. Involved in pre-mRNA splicing. Facilitates the cooperative formation of U2/U6 helix II in association with stem II in the spliceosome. Binds to RNA. This chain is Pre-mRNA-splicing factor slt-11 (slt-11), found in Neurospora crassa (strain ATCC 24698 / 74-OR23-1A / CBS 708.71 / DSM 1257 / FGSC 987).